The sequence spans 383 residues: Chaperone protein DnaJ (383 aa).

Positions 5–70 (DYYEALGVAR…QKRAAYDQFG (66 aa)) constitute a J domain. The CR-type zinc-finger motif lies at 139-217 (GTEVQIRVPT…CGGRGRVQSQ (79 aa)). Zn(2+)-binding residues include C152, C155, C169, C172, C191, C194, C205, and C208. CXXCXGXG motif repeat units lie at residues 152-159 (CDACDGKG), 169-176 (CPTCKGHG), 191-198 (CPRCGGSG), and 205-212 (CRKCGGRG). Residues 230–249 (TGDRIRLSGEGEPGENGGPP) are disordered.

This sequence belongs to the DnaJ family. Homodimer. Zn(2+) is required as a cofactor.

The protein resides in the cytoplasm. Functionally, participates actively in the response to hyperosmotic and heat shock by preventing the aggregation of stress-denatured proteins and by disaggregating proteins, also in an autonomous, DnaK-independent fashion. Unfolded proteins bind initially to DnaJ; upon interaction with the DnaJ-bound protein, DnaK hydrolyzes its bound ATP, resulting in the formation of a stable complex. GrpE releases ADP from DnaK; ATP binding to DnaK triggers the release of the substrate protein, thus completing the reaction cycle. Several rounds of ATP-dependent interactions between DnaJ, DnaK and GrpE are required for fully efficient folding. Also involved, together with DnaK and GrpE, in the DNA replication of plasmids through activation of initiation proteins. The protein is Chaperone protein DnaJ of Alkalilimnicola ehrlichii (strain ATCC BAA-1101 / DSM 17681 / MLHE-1).